Reading from the N-terminus, the 289-residue chain is MKREDVLMEALPYIQKFYGKTIVIKLGGHAMVDQSILETVIRDAVLLRYVGMKVVLVHGGGPEITAKMQAMGKEPKFVGGLRITDPETLEIAQMVLVGKINDGIVSLIANCGTRAVGISGNDGNLLIARKMDPQRVQVGEVMQEVDLGQVGEIEEVDPEVLHCLLAQNYIPVVAPIAIDRQGMSLNINADTAAAEIAIALSAFKLVNLTDVDGVMDADRTMVYHRLALTEAEAMIGAGVIAGGMIPKLEGCMKAVRNGVASAHVVNGNREHNLLLELFTDQGVGTMLTL.

Residues Gly-60–Gly-61, Arg-82, and Asn-186 contribute to the substrate site.

This sequence belongs to the acetylglutamate kinase family. ArgB subfamily.

The protein localises to the cytoplasm. It catalyses the reaction N-acetyl-L-glutamate + ATP = N-acetyl-L-glutamyl 5-phosphate + ADP. Its pathway is amino-acid biosynthesis; L-arginine biosynthesis; N(2)-acetyl-L-ornithine from L-glutamate: step 2/4. In terms of biological role, catalyzes the ATP-dependent phosphorylation of N-acetyl-L-glutamate. The polypeptide is Acetylglutamate kinase (Methanoculleus marisnigri (strain ATCC 35101 / DSM 1498 / JR1)).